Here is a 173-residue protein sequence, read N- to C-terminus: 2-C-methyl-D-erythritol 2,4-cyclodiphosphate synthase (173 aa).

A divalent metal cation is bound by residues aspartate 17 and histidine 19. Residues 17–19 (DVH) and 49–50 (HS) contribute to the 4-CDP-2-C-methyl-D-erythritol 2-phosphate site. Residue histidine 57 participates in a divalent metal cation binding. 4-CDP-2-C-methyl-D-erythritol 2-phosphate is bound by residues 76-80 (FPNTD), 147-150 (TTTE), and arginine 157.

It belongs to the IspF family. Homotrimer. It depends on a divalent metal cation as a cofactor.

The catalysed reaction is 4-CDP-2-C-methyl-D-erythritol 2-phosphate = 2-C-methyl-D-erythritol 2,4-cyclic diphosphate + CMP. The protein operates within isoprenoid biosynthesis; isopentenyl diphosphate biosynthesis via DXP pathway; isopentenyl diphosphate from 1-deoxy-D-xylulose 5-phosphate: step 4/6. Involved in the biosynthesis of isopentenyl diphosphate (IPP) and dimethylallyl diphosphate (DMAPP), two major building blocks of isoprenoid compounds. Catalyzes the conversion of 4-diphosphocytidyl-2-C-methyl-D-erythritol 2-phosphate (CDP-ME2P) to 2-C-methyl-D-erythritol 2,4-cyclodiphosphate (ME-CPP) with a corresponding release of cytidine 5-monophosphate (CMP). The polypeptide is 2-C-methyl-D-erythritol 2,4-cyclodiphosphate synthase (Ehrlichia ruminantium (strain Gardel)).